Consider the following 216-residue polypeptide: ATP-dependent Clp protease proteolytic subunit (216 aa).

The active-site Nucleophile is the Ser-101. His-126 is a catalytic residue.

It belongs to the peptidase S14 family. Component of the chloroplastic Clp protease core complex.

It is found in the plastid. The protein resides in the chloroplast stroma. The enzyme catalyses Hydrolysis of proteins to small peptides in the presence of ATP and magnesium. alpha-casein is the usual test substrate. In the absence of ATP, only oligopeptides shorter than five residues are hydrolyzed (such as succinyl-Leu-Tyr-|-NHMec, and Leu-Tyr-Leu-|-Tyr-Trp, in which cleavage of the -Tyr-|-Leu- and -Tyr-|-Trp bonds also occurs).. Functionally, cleaves peptides in various proteins in a process that requires ATP hydrolysis. Has a chymotrypsin-like activity. Plays a major role in the degradation of misfolded proteins. In Triticum aestivum (Wheat), this protein is ATP-dependent Clp protease proteolytic subunit.